The primary structure comprises 242 residues: Transcriptional regulatory protein GltR (242 aa).

The region spanning 7–123 (SILLVDDDQE…ELLARIKALL (117 aa)) is the Response regulatory domain. A 4-aspartylphosphate modification is found at Asp56. Residues 134-234 (GDVLAFEDWR…VRGSGYLLAA (101 aa)) constitute a DNA-binding region (ompR/PhoB-type).

In terms of processing, phosphorylated by GtrS.

It localises to the cytoplasm. Its activity is regulated as follows. Phosphorylation of GltR induces its dissociation from DNA leading to transcriptional activation. Its function is as follows. Member of the two-component regulatory system GtrS/GltR involved in the regulation of glucose metabolism and transport, as well as regulation of the exotoxin A gene expression. GltR controls the transcription of genes involved in glucose metabolism (glk and edd/gap-1) and transport (oprB) as well as the expression of toxA that encodes exotoxin A, the primary virulence factor. Acts as a repressor that is released from its target operators upon phosphorylation. Functionally, contributes to modulation of the type III secretion system (T3SS) in response to host cells via the regulation of the OprB transport system. This chain is Transcriptional regulatory protein GltR, found in Pseudomonas aeruginosa (strain ATCC 15692 / DSM 22644 / CIP 104116 / JCM 14847 / LMG 12228 / 1C / PRS 101 / PAO1).